We begin with the raw amino-acid sequence, 131 residues long: MSEGKEKWGVAHIYASFNNTIITVTDLTGAETITKSSGGMVVKQDRNESSPYAAMQMAGNVAQAAREKGIVGLHVKVRAPGRGKQRSPGPGAQAAIRALARAGMRIGLIEDVTPVPHDSIRPKGGRRGRRV.

Belongs to the universal ribosomal protein uS11 family. As to quaternary structure, part of the 30S ribosomal subunit.

In terms of biological role, located on the platform of the 30S subunit. This Methanospirillum hungatei JF-1 (strain ATCC 27890 / DSM 864 / NBRC 100397 / JF-1) protein is Small ribosomal subunit protein uS11.